A 155-amino-acid polypeptide reads, in one-letter code: MSHYEGDLRTPESARFAILASRWNARITDTLVAGARQSLAGNGIAEANIDVIRVPGAWELPLVAARLAAAHEHAAILTLGCVIRGDTRHYEHVADRCAEGLMRVQLDFGVPVLNGVLAVERVEDAEARAGGSHGNKGEEVALAALEMVNLLEQLP.

Residues W23, 57 to 59, and 81 to 83 contribute to the 5-amino-6-(D-ribitylamino)uracil site; these read AWE and CVI. 86 to 87 is a (2S)-2-hydroxy-3-oxobutyl phosphate binding site; sequence DT. The active-site Proton donor is the H89. N114 is a 5-amino-6-(D-ribitylamino)uracil binding site. R128 contributes to the (2S)-2-hydroxy-3-oxobutyl phosphate binding site.

It belongs to the DMRL synthase family. In terms of assembly, forms an icosahedral capsid composed of 60 subunits, arranged as a dodecamer of pentamers.

It carries out the reaction (2S)-2-hydroxy-3-oxobutyl phosphate + 5-amino-6-(D-ribitylamino)uracil = 6,7-dimethyl-8-(1-D-ribityl)lumazine + phosphate + 2 H2O + H(+). The protein operates within cofactor biosynthesis; riboflavin biosynthesis; riboflavin from 2-hydroxy-3-oxobutyl phosphate and 5-amino-6-(D-ribitylamino)uracil: step 1/2. Functionally, catalyzes the formation of 6,7-dimethyl-8-ribityllumazine by condensation of 5-amino-6-(D-ribitylamino)uracil with 3,4-dihydroxy-2-butanone 4-phosphate. This is the penultimate step in the biosynthesis of riboflavin. This chain is 6,7-dimethyl-8-ribityllumazine synthase, found in Stenotrophomonas maltophilia (strain K279a).